We begin with the raw amino-acid sequence, 284 residues long: MLIIETLPLLRQHIRRLRQEGKRVALVPTMGNLHDGHMKLVDEAKARADVVIVSIFVNPMQFDRPDDLVRYPRTLQEDCEKLNKRKVDYVFAPAVEEIYPHGLEGQTYVDVPGLSTMLEGASRPGHFRGVSTIVSKLFNLIQPDIACFGEKDFQQLALIRKMVADMSYDIEIVGVPIIRAKDGLALSSRNAYLTAEQRKIAPGLYNVMNSIAEKLIAGNRELQEIIAIAEQELNEKGFRADDIQIRDADTLQELTETSKRAVILAAAWLGQARLIDNQSVTLAQ.

30 to 37 (MGNLHDGH) serves as a coordination point for ATP. The Proton donor role is filled by histidine 37. Glutamine 61 contacts (R)-pantoate. Glutamine 61 is a beta-alanine binding site. ATP is bound at residue 149–152 (GEKD). Residue glutamine 155 participates in (R)-pantoate binding. ATP is bound by residues isoleucine 178 and 186 to 189 (LSSR).

The protein belongs to the pantothenate synthetase family. As to quaternary structure, homodimer.

It localises to the cytoplasm. It carries out the reaction (R)-pantoate + beta-alanine + ATP = (R)-pantothenate + AMP + diphosphate + H(+). It participates in cofactor biosynthesis; (R)-pantothenate biosynthesis; (R)-pantothenate from (R)-pantoate and beta-alanine: step 1/1. Functionally, catalyzes the condensation of pantoate with beta-alanine in an ATP-dependent reaction via a pantoyl-adenylate intermediate. The chain is Pantothenate synthetase from Salmonella heidelberg (strain SL476).